We begin with the raw amino-acid sequence, 159 residues long: Protein-export protein SecB (159 aa).

This sequence belongs to the SecB family. As to quaternary structure, homotetramer, a dimer of dimers. One homotetramer interacts with 1 SecA dimer.

The protein resides in the cytoplasm. Its function is as follows. One of the proteins required for the normal export of preproteins out of the cell cytoplasm. It is a molecular chaperone that binds to a subset of precursor proteins, maintaining them in a translocation-competent state. It also specifically binds to its receptor SecA. In Shewanella amazonensis (strain ATCC BAA-1098 / SB2B), this protein is Protein-export protein SecB.